A 151-amino-acid polypeptide reads, in one-letter code: Protein InSETG-4 (151 aa).

Its subcellular location is the cytoplasm. The protein resides in the cytosol. This Homo sapiens (Human) protein is Protein InSETG-4 (InSet4-G).